A 259-amino-acid chain; its full sequence is Ribosomal RNA small subunit methyltransferase A (259 aa).

Asparagine 15, leucine 17, glycine 41, glutamate 62, aspartate 86, and asparagine 105 together coordinate S-adenosyl-L-methionine.

This sequence belongs to the class I-like SAM-binding methyltransferase superfamily. rRNA adenine N(6)-methyltransferase family. RsmA subfamily.

It is found in the cytoplasm. The enzyme catalyses adenosine(1518)/adenosine(1519) in 16S rRNA + 4 S-adenosyl-L-methionine = N(6)-dimethyladenosine(1518)/N(6)-dimethyladenosine(1519) in 16S rRNA + 4 S-adenosyl-L-homocysteine + 4 H(+). Specifically dimethylates two adjacent adenosines (A1518 and A1519) in the loop of a conserved hairpin near the 3'-end of 16S rRNA in the 30S particle. May play a critical role in biogenesis of 30S subunits. This chain is Ribosomal RNA small subunit methyltransferase A, found in Mycoplasmopsis synoviae (strain 53) (Mycoplasma synoviae).